The following is a 64-amino-acid chain: MGMRMMFTLFLLVVLTTTVVSFPSDSASDGRDDEAKDERSDMYKSKRNGRCCHPACGKHFSCGR.

The signal sequence occupies residues 1–21; the sequence is MGMRMMFTLFLLVVLTTTVVS. Residues 22–47 constitute a propeptide that is removed on maturation; sequence FPSDSASDGRDDEAKDERSDMYKSKR. The interval 23–46 is disordered; it reads PSDSASDGRDDEAKDERSDMYKSK. Basic and acidic residues predominate over residues 28-44; the sequence is SDGRDDEAKDERSDMYK. Cystine bridges form between Cys51/Cys56 and Cys52/Cys62. The residue at position 62 (Cys62) is a Cysteine amide.

It belongs to the conotoxin A superfamily. In terms of tissue distribution, expressed by the venom duct.

It is found in the secreted. In terms of biological role, alpha-conotoxins act on postsynaptic membranes, they bind to the nicotinic acetylcholine receptors (nAChR) and thus inhibit them. In Conus achatinus (Little frog cone), this protein is Alpha-conotoxin-like Ac1.1b.